The following is a 252-amino-acid chain: Glucosamine-6-phosphate deaminase (252 aa).

Asp67 (proton acceptor; for enolization step) is an active-site residue. Asn137 acts as the For ring-opening step in catalysis. The Proton acceptor; for ring-opening step role is filled by His139. The active-site For ring-opening step is the Glu144.

Belongs to the glucosamine/galactosamine-6-phosphate isomerase family. NagB subfamily.

It carries out the reaction alpha-D-glucosamine 6-phosphate + H2O = beta-D-fructose 6-phosphate + NH4(+). It participates in amino-sugar metabolism; N-acetylneuraminate degradation; D-fructose 6-phosphate from N-acetylneuraminate: step 5/5. Functionally, catalyzes the reversible isomerization-deamination of glucosamine 6-phosphate (GlcN6P) to form fructose 6-phosphate (Fru6P) and ammonium ion. The protein is Glucosamine-6-phosphate deaminase of Staphylococcus aureus (strain MRSA252).